A 235-amino-acid chain; its full sequence is Aspartate/glutamate leucyltransferase (235 aa).

This sequence belongs to the R-transferase family. Bpt subfamily.

Its subcellular location is the cytoplasm. The enzyme catalyses N-terminal L-glutamyl-[protein] + L-leucyl-tRNA(Leu) = N-terminal L-leucyl-L-glutamyl-[protein] + tRNA(Leu) + H(+). It carries out the reaction N-terminal L-aspartyl-[protein] + L-leucyl-tRNA(Leu) = N-terminal L-leucyl-L-aspartyl-[protein] + tRNA(Leu) + H(+). Functionally, functions in the N-end rule pathway of protein degradation where it conjugates Leu from its aminoacyl-tRNA to the N-termini of proteins containing an N-terminal aspartate or glutamate. The polypeptide is Aspartate/glutamate leucyltransferase (Pseudomonas fluorescens (strain ATCC BAA-477 / NRRL B-23932 / Pf-5)).